Consider the following 301-residue polypeptide: ADP,ATP carrier protein 1 (301 aa).

Solcar repeat units lie at residues 8–100 (YGFA…YKQV), 113–203 (RYFL…AKGM), and 210–299 (TSIF…VKAL). 5 helical membrane-spanning segments follow: residues 10-39 (FAKD…LLLQ), 77-101 (LANV…KQVF), 112-132 (WRYF…SLCF), 181-201 (VSVQ…DTAK), and 213-233 (FVSW…SYPF). ADP is bound by residues arginine 82 and lysine 94. ADP is bound at residue arginine 237. An important for transport activity region spans residues 237–242 (RRRMMM). The Nucleotide carrier signature motif motif lies at 237–242 (RRRMMM). A helical membrane pass occupies residues 276-293 (AFSNVLRGTGGALVLVFY).

This sequence belongs to the mitochondrial carrier (TC 2.A.29) family. As to quaternary structure, monomer.

It localises to the mitochondrion inner membrane. It carries out the reaction ADP(in) + ATP(out) = ADP(out) + ATP(in). With respect to regulation, the matrix-open state (m-state) is inhibited by the membrane-permeable bongkrekic acid (BKA). The cytoplasmic-open state (c-state) is inhibited by the membrane-impermeable toxic inhibitor carboxyatractyloside (CATR). In terms of biological role, ADP:ATP antiporter that mediates import of ADP into the mitochondrial matrix for ATP synthesis, and export of ATP out to fuel the cell. Cycles between the cytoplasmic-open state (c-state) and the matrix-open state (m-state): operates by the alternating access mechanism with a single substrate-binding site intermittently exposed to either the cytosolic (c-state) or matrix (m-state) side of the inner mitochondrial membrane. The protein is ADP,ATP carrier protein 1 of Anopheles gambiae (African malaria mosquito).